We begin with the raw amino-acid sequence, 575 residues long: MTTMLKGIAASSGVAVAKAYLLVQPDLSFETKTIADTANEEARLDAALATSQSELQLIKDKAVTTLGEEAASVFDAHMMVLADPDMTAQIKAVINDKKVNAESALKEVTDMFIGIFEGMTDNAYMQERAADIKDVTKRVLAHLLGVKLPSPALIDEEVIIVAEDLTPSDTAQLDKKFVKAFVTNIGGRTSHSAIMARTLEIPAVLGTNNITELVSEGQLLAVSGLTGEVILDPSTEQQSEFHKAGDAYAAQKAEWAALKDAETVTADGRHYELAANIGTPKDVEGVNDNGAEAIGLYRTEFLYMDAQDFPTEDDQYEAYKAVLEGMNGKPVVVRTMDIGGDKTLPYFDLPKEMNPFLGWRALRISLSTAGDGMFRTQLRALLRASVHGQLRIMFPMVALVTEFRAAKKIYDEEKSKLIAEGVPVAEGIEVGIMIEIPAAAMLADQFAKEVDFFSIGTNDLIQYTMAADRMNEQVSYLYQPYNPSILRLINNVIKAAHAEGKWAGMCGEMAGDQTAVPLLMGMGLDEFSMSATSVLQTRSLMKRLDSKKMEELSSKALSECATMEEVIALVEEYTK.

The Tele-phosphohistidine intermediate role is filled by His191. Residues Arg298 and Arg334 each contribute to the phosphoenolpyruvate site. The Mg(2+) site is built by Glu435 and Asp459. Phosphoenolpyruvate-binding positions include Asn458–Asp459 and Arg469. Cys506 (proton donor) is an active-site residue.

The protein belongs to the PEP-utilizing enzyme family. As to quaternary structure, homodimer. Requires Mg(2+) as cofactor.

Its subcellular location is the cytoplasm. It catalyses the reaction L-histidyl-[protein] + phosphoenolpyruvate = N(pros)-phospho-L-histidyl-[protein] + pyruvate. Its function is as follows. General (non sugar-specific) component of the phosphoenolpyruvate-dependent sugar phosphotransferase system (sugar PTS). This major carbohydrate active-transport system catalyzes the phosphorylation of incoming sugar substrates concomitantly with their translocation across the cell membrane. Enzyme I transfers the phosphoryl group from phosphoenolpyruvate (PEP) to the phosphoryl carrier protein (HPr). In Lactococcus lactis subsp. cremoris (Streptococcus cremoris), this protein is Phosphoenolpyruvate-protein phosphotransferase (ptsI).